Here is a 620-residue protein sequence, read N- to C-terminus: Probable potassium transport system protein Kup (620 aa).

12 helical membrane passes run 11–31 (LAFL…LYAF), 51–71 (ILSL…LLLV), 100–120 (IAML…VITP), 138–158 (LAPY…AVQA), 167–187 (FFAP…AHAI), 202–222 (AVHF…LVVL), 246–266 (WFAL…AYLL), 288–308 (LILL…SGIF), 334–354 (GQIY…FVML), 364–384 (AAYG…LVLV), 396–416 (VVTI…STST), and 418–438 (LMEG…VMYI).

This sequence belongs to the HAK/KUP transporter (TC 2.A.72) family.

Its subcellular location is the cell inner membrane. It carries out the reaction K(+)(in) + H(+)(in) = K(+)(out) + H(+)(out). Transport of potassium into the cell. Likely operates as a K(+):H(+) symporter. This Vibrio cholerae serotype O1 (strain ATCC 39315 / El Tor Inaba N16961) protein is Probable potassium transport system protein Kup.